Reading from the N-terminus, the 319-residue chain is Acetyl-coenzyme A carboxylase carboxyl transferase subunit alpha (319 aa).

The region spanning 39-293 is the CoA carboxyltransferase C-terminal domain; that stretch reads RLQKKSNDLT…KAVLEKQLHE (255 aa).

It belongs to the AccA family. In terms of assembly, acetyl-CoA carboxylase is a heterohexamer composed of biotin carboxyl carrier protein (AccB), biotin carboxylase (AccC) and two subunits each of ACCase subunit alpha (AccA) and ACCase subunit beta (AccD).

It is found in the cytoplasm. The catalysed reaction is N(6)-carboxybiotinyl-L-lysyl-[protein] + acetyl-CoA = N(6)-biotinyl-L-lysyl-[protein] + malonyl-CoA. Its pathway is lipid metabolism; malonyl-CoA biosynthesis; malonyl-CoA from acetyl-CoA: step 1/1. Component of the acetyl coenzyme A carboxylase (ACC) complex. First, biotin carboxylase catalyzes the carboxylation of biotin on its carrier protein (BCCP) and then the CO(2) group is transferred by the carboxyltransferase to acetyl-CoA to form malonyl-CoA. This Neisseria meningitidis serogroup C (strain 053442) protein is Acetyl-coenzyme A carboxylase carboxyl transferase subunit alpha.